The sequence spans 467 residues: Phytase A (467 aa).

Residues 1–23 form the signal peptide; the sequence is MGVSAVLLPLYLLAGVTSGLAVP. Residue asparagine 27 is glycosylated (N-linked (GlcNAc...) asparagine). Cysteines 31 and 40 form a disulfide. Residues glutamine 50 and tyrosine 51 each contribute to the 1D-myo-inositol hexakisphosphate site. The N-linked (GlcNAc...) asparagine glycan is linked to asparagine 59. 4 disulfide bridges follow: cysteine 71–cysteine 414, cysteine 215–cysteine 465, cysteine 264–cysteine 282, and cysteine 436–cysteine 444. Positions 81, 82, 85, and 88 each coordinate 1D-myo-inositol hexakisphosphate. Histidine 82 acts as the Nucleophile in catalysis. Asparagine 105 and asparagine 120 each carry an N-linked (GlcNAc...) asparagine glycan. Residue arginine 165 coordinates 1D-myo-inositol hexakisphosphate. N-linked (GlcNAc...) asparagine glycosylation is found at asparagine 207 and asparagine 230. Lysine 301 is a binding site for 1D-myo-inositol hexakisphosphate. N-linked (GlcNAc...) asparagine glycosylation is found at asparagine 339 and asparagine 352. Histidine 361 and aspartate 362 together coordinate 1D-myo-inositol hexakisphosphate. Asparagine 376 and asparagine 388 each carry an N-linked (GlcNAc...) asparagine glycan.

This sequence belongs to the histidine acid phosphatase family. Monomer.

Its subcellular location is the secreted. It catalyses the reaction 1D-myo-inositol hexakisphosphate + H2O = 1D-myo-inositol 1,2,4,5,6-pentakisphosphate + phosphate. It carries out the reaction 1D-myo-inositol 1,2,4,5,6-pentakisphosphate + H2O = 1D-myo-inositol 1,2,5,6-tetrakisphosphate + phosphate. The enzyme catalyses 1D-myo-inositol 1,2,5,6-tetrakisphosphate + H2O = 1D-myo-inositol 1,2,6-trisphosphate + phosphate. The catalysed reaction is 1D-myo-inositol 1,2,6-trisphosphate + H2O = 1D-myo-inositol 1,2-bisphosphate + phosphate. It catalyses the reaction 1D-myo-inositol 1,2-bisphosphate + H2O = 1D-myo-inositol 2-phosphate + phosphate. In terms of biological role, catalyzes the phosphate monoester hydrolysis of phytic acid (myo-inositol hexakisphosphate), which results in the stepwise formation of myo-inositol pentakis-, tetrakis-, tris-, bis-, and monophosphates, as well as the liberation of inorganic phosphate. Myo-inositol 2-monophosphate is the end product. The sequence is that of Phytase A (phyA) from Aspergillus awamori (Black koji mold).